Consider the following 316-residue polypeptide: 4-diphosphocytidyl-2-C-methyl-D-erythritol kinase (316 aa).

Lys-32 is a catalytic residue. Residue 126 to 136 (PVGAGLGGGSA) participates in ATP binding. The active site involves Asp-168.

Belongs to the GHMP kinase family. IspE subfamily.

It catalyses the reaction 4-CDP-2-C-methyl-D-erythritol + ATP = 4-CDP-2-C-methyl-D-erythritol 2-phosphate + ADP + H(+). It functions in the pathway isoprenoid biosynthesis; isopentenyl diphosphate biosynthesis via DXP pathway; isopentenyl diphosphate from 1-deoxy-D-xylulose 5-phosphate: step 3/6. Its function is as follows. Catalyzes the phosphorylation of the position 2 hydroxy group of 4-diphosphocytidyl-2C-methyl-D-erythritol. The sequence is that of 4-diphosphocytidyl-2-C-methyl-D-erythritol kinase from Bifidobacterium longum subsp. infantis (strain ATCC 15697 / DSM 20088 / JCM 1222 / NCTC 11817 / S12).